Reading from the N-terminus, the 270-residue chain is MEQFYYILKYLILGLFQGLTEPIPISSSGHLVLAQHLLGLKIEGFSFELLVNSASLLAVLLIYRNDLIRLTKNGLSYIFTRAEDAKSDFFFIIYLVIATIPAGVIGVLFKDYIDQYLKGVKMVGISLLITAVGLWIIRNLRGRRNDGDLSMKDAIIVGLAQACALIPGISRSGATIVAAMLLGMKQETALRFSFLLYIPVSLGGLLLSITDIAKDPNLDTLFVPYIVAFIATFIMTYISLKWFMNIMAKGNLKYFSFYCIIVGVLTLIFL.

7 helical membrane-spanning segments follow: residues 5 to 25 (YYILKYLILGLFQGLTEPIPI), 42 to 62 (IEGFSFELLVNSASLLAVLLI), 89 to 109 (FFFIIYLVIATIPAGVIGVLF), 117 to 137 (LKGVKMVGISLLITAVGLWII), 192 to 212 (FSFLLYIPVSLGGLLLSITDI), 220 to 240 (TLFVPYIVAFIATFIMTYISL), and 250 to 270 (GNLKYFSFYCIIVGVLTLIFL).

It belongs to the UppP family.

The protein localises to the cell membrane. It catalyses the reaction di-trans,octa-cis-undecaprenyl diphosphate + H2O = di-trans,octa-cis-undecaprenyl phosphate + phosphate + H(+). In terms of biological role, catalyzes the dephosphorylation of undecaprenyl diphosphate (UPP). Confers resistance to bacitracin. This Bacillus anthracis protein is Undecaprenyl-diphosphatase 3.